The chain runs to 1151 residues: Protein kinase C-like 1 (1151 aa).

REM-1 domains lie at Met-1–Gln-67 and Lys-106–Asp-183. Positions Lys-64–Phe-88 are disordered. The 120-residue stretch at Gln-190–Asn-309 folds into the C2 domain. Ser-226 is modified (phosphoserine). The tract at residues Gly-306–Gly-331 is disordered. Phorbol-ester/DAG-type zinc fingers lie at residues Gly-414–Cys-461 and Pro-481–Cys-531. Disordered stretches follow at residues Gln-546–Lys-620 and Ala-649–Arg-669. A compositionally biased stretch (polar residues) spans Pro-560 to Ser-577. A compositionally biased stretch (basic and acidic residues) spans Val-605–Lys-620. Ser-761 carries the phosphoserine modification. Residues Leu-782–Arg-816 form a disordered region. A compositionally biased stretch (low complexity) spans Thr-792–Ser-806. The span at Ala-807–Arg-816 shows a compositional bias: basic residues. In terms of domain architecture, Protein kinase spans Phe-824–Phe-1083. ATP is bound by residues Leu-830–Val-838 and Lys-853. The active-site Proton acceptor is Asp-949. Positions Arg-1084–Leu-1151 constitute an AGC-kinase C-terminal domain.

This sequence belongs to the protein kinase superfamily. AGC Ser/Thr protein kinase family. PKC subfamily.

The enzyme catalyses L-seryl-[protein] + ATP = O-phospho-L-seryl-[protein] + ADP + H(+). It carries out the reaction L-threonyl-[protein] + ATP = O-phospho-L-threonyl-[protein] + ADP + H(+). Required for cell growth and for the G2-&gt;M transition of the cell division cycle. Mediates a protein kinase cascade; it activates BCK1 which itself activates MKK1/MKK2. The protein is Protein kinase C-like 1 (PKC1) of Saccharomyces cerevisiae (strain ATCC 204508 / S288c) (Baker's yeast).